A 77-amino-acid polypeptide reads, in one-letter code: Omega-conotoxin TxVII (77 aa).

Residues 1-22 (MKLTCMMIVAVLFLTAWTFATA) form the signal peptide. The propeptide occupies 23-49 (DDSGNGLENLFPKAHHEMKNPEASKLN). 3 disulfides stabilise this stretch: C52–C67, C59–C71, and C66–C75.

Expressed by the venom duct.

Its subcellular location is the secreted. Functionally, omega-conotoxins act at presynaptic membranes, they bind and block voltage-gated calcium channels (Cav). Specifically acts on L-type channels. It blocks molluscan dihydropyridine-sensitive calcium channels. The chain is Omega-conotoxin TxVII from Conus textile (Cloth-of-gold cone).